Reading from the N-terminus, the 121-residue chain is Cu-Zn superoxide dismutase-like protein (121 aa).

C48 and C98 are joined by a disulfide.

The protein belongs to the Cu-Zn superoxide dismutase family.

Its subcellular location is the host cytoplasm. Virion protein with no enzymatic activity. This chain is Cu-Zn superoxide dismutase-like protein, found in Vaccinia virus (strain Ankara) (VACV).